The sequence spans 201 residues: Recombination protein RecR (201 aa).

The C4-type zinc finger occupies 60–75 (CSCCGNVDTIDPCTVC). Residues 83-178 (AVIIVVEDVA…RITRLAHGVP (96 aa)) form the Toprim domain.

Belongs to the RecR family.

Functionally, may play a role in DNA repair. It seems to be involved in an RecBC-independent recombinational process of DNA repair. It may act with RecF and RecO. This chain is Recombination protein RecR, found in Rhizobium meliloti (strain 1021) (Ensifer meliloti).